The following is a 175-amino-acid chain: MVIDRAGYRLNVGIILVNDSDRVFWGRRSGHDAWQFPQGGLAPGETAMQAMYRELHEEVGLDKGDVEILGSTRRWLKYRLPKQYLRHGSEPLVIGQKQKWYLLKLVTSEQKVRLDLSDSPEFDSWRWVDFHEPEQQVIFFKRQVYIQALKELEPLLKKERRTPYGLKRKRGNQRA.

The region spanning 7 to 150 is the Nudix hydrolase domain; sequence GYRLNVGIIL…KRQVYIQALK (144 aa). The Nudix box motif lies at 39–60; sequence GGLAPGETAMQAMYRELHEEVG.

This sequence belongs to the Nudix hydrolase family. RppH subfamily. A divalent metal cation is required as a cofactor.

Functionally, accelerates the degradation of transcripts by removing pyrophosphate from the 5'-end of triphosphorylated RNA, leading to a more labile monophosphorylated state that can stimulate subsequent ribonuclease cleavage. This is RNA pyrophosphohydrolase from Legionella pneumophila (strain Paris).